A 250-amino-acid polypeptide reads, in one-letter code: ATP synthase subunit b 2 (250 aa).

The helical transmembrane segment at 2–22 threads the bilayer; that stretch reads LIDWFTVFAQILNFVILLGLL.

Belongs to the ATPase B chain family. In terms of assembly, F-type ATPases have 2 components, F(1) - the catalytic core - and F(0) - the membrane proton channel. F(1) has five subunits: alpha(3), beta(3), gamma(1), delta(1), epsilon(1). F(0) has four main subunits: a(1), b(1), b'(1) and c(10-14). The alpha and beta chains form an alternating ring which encloses part of the gamma chain. F(1) is attached to F(0) by a central stalk formed by the gamma and epsilon chains, while a peripheral stalk is formed by the delta, b and b' chains.

It localises to the cellular thylakoid membrane. In terms of biological role, f(1)F(0) ATP synthase produces ATP from ADP in the presence of a proton or sodium gradient. F-type ATPases consist of two structural domains, F(1) containing the extramembraneous catalytic core and F(0) containing the membrane proton channel, linked together by a central stalk and a peripheral stalk. During catalysis, ATP synthesis in the catalytic domain of F(1) is coupled via a rotary mechanism of the central stalk subunits to proton translocation. Its function is as follows. Component of the F(0) channel, it forms part of the peripheral stalk, linking F(1) to F(0). In Picosynechococcus sp. (strain ATCC 27264 / PCC 7002 / PR-6) (Agmenellum quadruplicatum), this protein is ATP synthase subunit b 2.